A 753-amino-acid polypeptide reads, in one-letter code: MTKRSKGANEDKLIETKSKNVSGKSQKQKKPVEAESLKEEDLLQASGTDSDYDGDSLPGSLNSDDFDSDFSDSEDDGTHEGTEDGDVEFSDDDDVLEHDGSIDNEDDDGSEHVGSDNNEEHGSDEDSERGEAVEESDSSEDEVPSRNTVGNVPLKWYEDEKHIGYDLTGKKITKKEKQDKLDSFLATIDDSKTWRKIYDEYNDEDVELTKEESKIVQRILKGEAPHADFDPYAPYVEWFKHDDAIHPLSSAPEPKRRFIPSKWEAKKVVKIVRAIRKGWIKFDKPEEEPNVYLLWGDDSTSDQKSKHLTYIPPPKLKLPGHDESYNPSLEYIPTEEEKASYELMFEEDRPKFIPTRFTSLRSIPAYENALKESFERCLDLYLCPRVRKKRINIDPESLKPKLPSRKDLRPYPNSCYLEYKGHTGAVTSISTDSSGEWIASGSTDGSVRMWEVETGRCLKVWQFDEAIMCVAWNPLSRLPVLAVAMGRDLFFLNTELGTDEEQEITKERLHSGNIPEPDASVAAIVTWLPDELYGGIKIRHFKSISSIDWHRKGDYLSTVMASGETRGVVLHQLSKQKTQRLPFKIRGLPVCTLFHPSLSYFFVATRKDVRVYNLLKPGEATKKLETGLREISSMAIHPGGDNLIVGSKEGKMCWFDMDLSSKPYKTLKNHPKDITNVAVHRSYPLFASCSEDSTAYVFHGMVYNDLNQNPLIVPLEILRGHSSKGGVLDCKFHPRQPWLFTAGADSIIKLYCH.

The disordered stretch occupies residues 1-155 (MTKRSKGANE…RNTVGNVPLK (155 aa)). Composition is skewed to basic and acidic residues over residues 7–18 (GANEDKLIETKS) and 30–41 (KPVEAESLKEED). 2 stretches are compositionally biased toward acidic residues: residues 64 to 75 (DDFDSDFSDSED) and 83 to 109 (EDGDVEFSDDDDVLEHDGSIDNEDDDG). Residues 110 to 121 (SEHVGSDNNEEH) are compositionally biased toward basic and acidic residues. Positions 122–142 (GSDEDSERGEAVEESDSSEDE) are enriched in acidic residues. WD repeat units follow at residues 421–462 (GHTG…KVWQ), 464–502 (DEAIMCVAWNPLSRLPVLAVAMGRDLFFLNTELGTDEEQ), 539–581 (RHFK…TQRL), 626–665 (TGLREISSMAIHPGGDNLIVGSKEGKMCWFDMDLSSKPYK), 669–708 (NHPKDITNVAVHRSYPLFASCSEDSTAYVFHGMVYNDLNQ), and 722–753 (SSKGGVLDCKFHPRQPWLFTAGADSIIKLYCH).

This sequence belongs to the WD repeat BOP1/ERB1 family. Interacts with PES. Interacts with WDR12.

Its subcellular location is the nucleus. It is found in the nucleolus. It localises to the nucleoplasm. Functionally, required for maturation of ribosomal RNAs and formation of the large ribosomal subunit. Plays an essential role in cell growth and survival through its regulation of ribosome biogenesis and mitotic progression. This chain is Ribosome biogenesis protein BOP1 homolog, found in Arabidopsis thaliana (Mouse-ear cress).